Here is a 168-residue protein sequence, read N- to C-terminus: ATP synthase subunit b (168 aa).

The chain crosses the membrane as a helical span at residues 9–29; that stretch reads AIPFGTIAYTLFIFLLLLVML.

The protein belongs to the ATPase B chain family. As to quaternary structure, F-type ATPases have 2 components, F(1) - the catalytic core - and F(0) - the membrane proton channel. F(1) has five subunits: alpha(3), beta(3), gamma(1), delta(1), epsilon(1). F(0) has three main subunits: a(1), b(2) and c(10-14). The alpha and beta chains form an alternating ring which encloses part of the gamma chain. F(1) is attached to F(0) by a central stalk formed by the gamma and epsilon chains, while a peripheral stalk is formed by the delta and b chains.

It localises to the cell membrane. F(1)F(0) ATP synthase produces ATP from ADP in the presence of a proton or sodium gradient. F-type ATPases consist of two structural domains, F(1) containing the extramembraneous catalytic core and F(0) containing the membrane proton channel, linked together by a central stalk and a peripheral stalk. During catalysis, ATP synthesis in the catalytic domain of F(1) is coupled via a rotary mechanism of the central stalk subunits to proton translocation. Functionally, component of the F(0) channel, it forms part of the peripheral stalk, linking F(1) to F(0). The polypeptide is ATP synthase subunit b (Bacillus cereus (strain ATCC 10987 / NRS 248)).